Reading from the N-terminus, the 155-residue chain is MTQDNSPAKPKAPPKSARRRARELALQGLYQWLLNRNDPGVVEAHLHDAQGFNKADRAHFDALLHGAIREEATLTESFTPFLDRPVAELSPVERAALLVGAYELVHCVDIPYKVVINEAVELAKTFGGVEGYKYVNGVLDKLAAQVRAVEVAARR.

Belongs to the NusB family.

Its function is as follows. Involved in transcription antitermination. Required for transcription of ribosomal RNA (rRNA) genes. Binds specifically to the boxA antiterminator sequence of the ribosomal RNA (rrn) operons. The sequence is that of Transcription antitermination protein NusB from Ralstonia nicotianae (strain ATCC BAA-1114 / GMI1000) (Ralstonia solanacearum).